The following is a 487-amino-acid chain: 2-aminomuconic semialdehyde dehydrogenase (487 aa).

Residue 231-236 coordinates NAD(+); that stretch reads GSQPTA. Glu-253 (proton acceptor) is an active-site residue. The active-site Nucleophile is the Cys-287. Ser-362 carries the post-translational modification Phosphoserine.

This sequence belongs to the aldehyde dehydrogenase family. Detected in hepatocytes and in proximal and distal convoluted tubules in kidney cortex (at protein level). Highly expressed in adult liver and in kidney cortex. First detected in embryonic liver after 15 days of development.

The protein localises to the cytoplasm. The catalysed reaction is 2-aminomuconate 6-semialdehyde + NAD(+) + H2O = (2Z,4E)-2-aminomuconate + NADH + 2 H(+). The protein operates within amino-acid degradation; L-kynurenine degradation. In terms of biological role, catalyzes the NAD-dependent oxidation of 2-aminomuconic semialdehyde of the kynurenine metabolic pathway in L-tryptophan degradation. The polypeptide is 2-aminomuconic semialdehyde dehydrogenase (Aldh8a1) (Mus musculus (Mouse)).